Here is a 97-residue protein sequence, read N- to C-terminus: Co-chaperonin GroES (97 aa).

The protein belongs to the GroES chaperonin family. As to quaternary structure, heptamer of 7 subunits arranged in a ring. Interacts with the chaperonin GroEL.

It localises to the cytoplasm. Its function is as follows. Together with the chaperonin GroEL, plays an essential role in assisting protein folding. The GroEL-GroES system forms a nano-cage that allows encapsulation of the non-native substrate proteins and provides a physical environment optimized to promote and accelerate protein folding. GroES binds to the apical surface of the GroEL ring, thereby capping the opening of the GroEL channel. The sequence is that of Co-chaperonin GroES from Stenotrophomonas maltophilia (Pseudomonas maltophilia).